An 816-amino-acid chain; its full sequence is Endo-acting ulvan lyase (816 aa).

The signal sequence occupies residues 1–23 (MGTSVRRISVVLMMLFGTNFCWS).

It belongs to the polysaccharide lyase family.

It localises to the cell surface. It is found in the periplasm. In terms of biological role, ulvan lyase involved in ulvan degradation. Ulvan is the main polysaccharide component of the Ulvales (green seaweed) cell wall. It is composed of disaccharide building blocks comprising 3-sulfated rhamnose (Rha3S) linked to D-glucuronic acid (GlcA), L-iduronic acid (IduA), or D-xylose (Xyl). Ulvan lyase catalyzes the endolytic cleavage of the glycosidic bond between Rha3S and the uronic acids GlcA or IduA, producing oligosaccharides that have unsaturated 4-deoxy-L-threo-hex-4-enopyranosiduronic acid (deltaUA) at the non-reducing end. This results eventually in the degradation of the ulvan polysaccharide into deltaUA-Rha3S disaccharides and deltaUA-Rha3S-Xyl-Rha3S tetrasaccharides. The chain is Endo-acting ulvan lyase from Formosa agariphila (strain DSM 15362 / KCTC 12365 / LMG 23005 / KMM 3901 / M-2Alg 35-1).